Here is a 191-residue protein sequence, read N- to C-terminus: 3-hydroxyanthranilate 3,4-dioxygenase 2 (191 aa).

Arginine 48 contacts O2. Fe cation-binding residues include histidine 52, glutamate 73, and histidine 111. Glutamate 73 contributes to the substrate binding site. Residues arginine 115 and glutamate 125 each coordinate substrate.

It belongs to the 3-HAO family. Requires Fe(2+) as cofactor.

The protein localises to the cytoplasm. The enzyme catalyses 3-hydroxyanthranilate + O2 = (2Z,4Z)-2-amino-3-carboxymuconate 6-semialdehyde. It functions in the pathway cofactor biosynthesis; NAD(+) biosynthesis; quinolinate from L-kynurenine: step 3/3. In terms of biological role, catalyzes the oxidative ring opening of 3-hydroxyanthranilate to 2-amino-3-carboxymuconate semialdehyde, which spontaneously cyclizes to quinolinate. The chain is 3-hydroxyanthranilate 3,4-dioxygenase 2 (bna1-2) from Aspergillus clavatus (strain ATCC 1007 / CBS 513.65 / DSM 816 / NCTC 3887 / NRRL 1 / QM 1276 / 107).